The chain runs to 532 residues: MRVLGVEGTAWCASAALYDADAAADSVVIESDAYQPDSGGIHPREAAEHMREAIPAVIETVLGAADGDIDAVAFSRGPGLGPCLRIVGSAARALAQALDVPLVGVNHMVAHLEIGRHQSGFQQPVCLNASGANAHVLAYRNGRYRVLGETMDTGVGNAIDKFTRHVGWQHPGGPKVETHARDGEYTALPYVVKGMDFSFSGIMSAAKDAVDDGVPVADVCRGLEETMFAMLTEVAERALALTGRDELVLGGGVGQNDRLRGMLEAMCAARGASFHAPEPRFLRDNAGMIAVLGAKMAAAGATIPVADSAINSQFRPDEVSVTWRDPESPARDPGADAVRQGAEATVTFADDAVIKERAPKAYRHDRLDDRLRRDRTVLEARLTSDARRQGVPTPLVRDVDVPAATITLQHVGDADLRDALSPARVRAVGRHLATIHDGGFVHGDPTTRNVRVGAERTFLIDFGLGYYTDAVEDYAMDCHVFEQSLVGTAADADALVAAFEDAYEEAAASGRVLDQLRAVEGRGRYQDDPETA.

Residues 1–323 are kae1; it reads MRVLGVEGTA…FRPDEVSVTW (323 aa). Fe cation-binding residues include H107 and H111. L-threonylcarbamoyladenylate-binding positions include 128–132, D160, G173, E177, and N256; that span reads NASGA. D284 is a binding site for Fe cation. In terms of domain architecture, Protein kinase spans 329–532; the sequence is PARDPGADAV…GRYQDDPETA (204 aa). Residues 338 to 346 and K355 each bind ATP; that span reads VRQGAEATV. Residue D444 is the Proton acceptor; for kinase activity of the active site.

In the N-terminal section; belongs to the KAE1 / TsaD family. This sequence in the C-terminal section; belongs to the protein kinase superfamily. Tyr protein kinase family. BUD32 subfamily. As to quaternary structure, component of the KEOPS complex that consists of Kae1, Bud32, Cgi121 and Pcc1; the whole complex dimerizes. The cofactor is Fe(2+).

The protein localises to the cytoplasm. The enzyme catalyses L-seryl-[protein] + ATP = O-phospho-L-seryl-[protein] + ADP + H(+). It carries out the reaction L-threonyl-[protein] + ATP = O-phospho-L-threonyl-[protein] + ADP + H(+). The catalysed reaction is L-threonylcarbamoyladenylate + adenosine(37) in tRNA = N(6)-L-threonylcarbamoyladenosine(37) in tRNA + AMP + H(+). Required for the formation of a threonylcarbamoyl group on adenosine at position 37 (t(6)A37) in tRNAs that read codons beginning with adenine. Is a component of the KEOPS complex that is probably involved in the transfer of the threonylcarbamoyl moiety of threonylcarbamoyl-AMP (TC-AMP) to the N6 group of A37. The Kae1 domain likely plays a direct catalytic role in this reaction. The Bud32 domain probably displays kinase activity that regulates Kae1 function. This Halobacterium salinarum (strain ATCC 700922 / JCM 11081 / NRC-1) (Halobacterium halobium) protein is Probable bifunctional tRNA threonylcarbamoyladenosine biosynthesis protein.